The primary structure comprises 426 residues: Protein FAM181B (426 aa).

2 disordered regions span residues 106 to 157 and 226 to 246; these read GLMG…AAAA and NLPPSFFTEPSRAGGGGCGPS. Residues 128-141 are compositionally biased toward low complexity; it reads PLAAPSAPTVAAPA.

It belongs to the FAM181 family.

This chain is Protein FAM181B (FAM181B), found in Homo sapiens (Human).